The following is a 335-amino-acid chain: DNA polymerase beta (335 aa).

Lysine 41 participates in a covalent cross-link: Glycyl lysine isopeptide (Lys-Gly) (interchain with G-Cter in ubiquitin). Lysine 60 serves as a coordination point for K(+). Residue lysine 60 coordinates Na(+). A Glycyl lysine isopeptide (Lys-Gly) (interchain with G-Cter in ubiquitin) cross-link involves residue lysine 61. K(+) contacts are provided by leucine 62 and valine 65. Residues leucine 62 and valine 65 each coordinate Na(+). The active-site Nucleophile; Schiff-base intermediate with DNA; for 5'-dRP lyase activity is the lysine 72. N6-acetyllysine is present on lysine 72. Lysine 81 participates in a covalent cross-link: Glycyl lysine isopeptide (Lys-Gly) (interchain with G-Cter in ubiquitin). An Omega-N-methylarginine; by PRMT6 modification is found at arginine 83. 3 residues coordinate K(+): threonine 101, valine 103, and isoleucine 106. The Na(+) site is built by threonine 101, valine 103, and isoleucine 106. Arginine 149 is a binding site for a 2'-deoxyribonucleoside 5'-triphosphate. Residue arginine 152 is modified to Omega-N-methylarginine; by PRMT6. The a 2'-deoxyribonucleoside 5'-triphosphate site is built by serine 180, arginine 183, glycine 189, and aspartate 190. The interval 183-192 is DNA-binding; that stretch reads RGAESSGDMD. Residues aspartate 190, aspartate 192, and aspartate 256 each coordinate Mg(2+).

This sequence belongs to the DNA polymerase type-X family. Monomer. Binds single-stranded DNA (ssDNA). Interacts with APEX1, LIG1, LIG3, FEN1, PCNA and XRCC1. Interacts with HUWE1/ARF-BP1, STUB1/CHIP and USP47. Interacts with FAM168A. It depends on Mg(2+) as a cofactor. Methylation by PRMT6 stimulates the polymerase activity by enhancing DNA binding and processivity. Post-translationally, ubiquitinated at Lys-41, Lys-61 and Lys-81: monoubiquitinated by HUWE1/ARF-BP1. Monoubiquitinated protein is then the target of STUB1/CHIP, which catalyzes polyubiquitination from monoubiquitin, leading to degradation by the proteasome. USP47 mediates the deubiquitination of monoubiquitinated protein, preventing polyubiquitination by STUB1/CHIP and its subsequent degradation.

The protein resides in the nucleus. The protein localises to the cytoplasm. The enzyme catalyses DNA(n) + a 2'-deoxyribonucleoside 5'-triphosphate = DNA(n+1) + diphosphate. The catalysed reaction is a 5'-end 2'-deoxyribose-2'-deoxyribonucleotide-DNA = (2E,4S)-4-hydroxypenten-2-al-5-phosphate + a 5'-end 5'-phospho-2'-deoxyribonucleoside-DNA + H(+). It carries out the reaction 2'-deoxyribonucleotide-(2'-deoxyribose 5'-phosphate)-2'-deoxyribonucleotide-DNA = a 3'-end 2'-deoxyribonucleotide-(2,3-dehydro-2,3-deoxyribose 5'-phosphate)-DNA + a 5'-end 5'-phospho-2'-deoxyribonucleoside-DNA + H(+). Functionally, repair polymerase that plays a key role in base-excision repair. During this process, the damaged base is excised by specific DNA glycosylases, the DNA backbone is nicked at the abasic site by an apurinic/apyrimidic (AP) endonuclease, and POLB removes 5'-deoxyribose-phosphate from the preincised AP site acting as a 5'-deoxyribose-phosphate lyase (5'-dRP lyase); through its DNA polymerase activity, it adds one nucleotide to the 3' end of the arising single-nucleotide gap. Conducts 'gap-filling' DNA synthesis in a stepwise distributive fashion rather than in a processive fashion as for other DNA polymerases. It is also able to cleave sugar-phosphate bonds 3' to an intact AP site, acting as an AP lyase. This Bos taurus (Bovine) protein is DNA polymerase beta (POLB).